The chain runs to 501 residues: MTDLPYPEYECWFLTGSQHLYGEDVLSAVARQSQAIVEALNAAGLPVRLVWKPVLTDATGIRRMCSEASATDACIGVIAWMHTFSPAKAWINGLLALRKPLLHLHTQANLTLPWSTIDMDFMNLNQAAHGDREFGYVAARLAIPRKIVTGHFSDPDVVRDIAAWQRAAAGLADLRSTRLVRFGDTMRNVAVTDGDRVEAQIRLGSAIETYGVHDLGVRVDAVAESDVDALVDRYLADYDMAPELTIGGARHESLRYAAKLELALRSFLHDGRFTAFTTNFEDLGPLRQLPGIAVQRLMADGFGFGAEGDWKTALLVRAVKTMSRGLPGGTSFMEDYTYHLEPSGRLVLGAHMLEVCPTLTSATPRCEIHPLLMGGREDPVRLVFTADPAPAVIVGLCDMGDRLRLVANTADLVAPPEPLPRLPVARAVWQPHPELKTAATAWIAAGGPHHTALSTAVSAREIRDFARMAGLELVLIDEHTALDAALDRLWAIEQTRASRPW.

Residues glutamate 307, glutamate 334, histidine 351, and histidine 450 each coordinate Mn(2+).

It belongs to the arabinose isomerase family. The cofactor is Mn(2+).

The enzyme catalyses beta-L-arabinopyranose = L-ribulose. Its pathway is carbohydrate degradation; L-arabinose degradation via L-ribulose; D-xylulose 5-phosphate from L-arabinose (bacterial route): step 1/3. Its function is as follows. Catalyzes the conversion of L-arabinose to L-ribulose. This Acidothermus cellulolyticus (strain ATCC 43068 / DSM 8971 / 11B) protein is L-arabinose isomerase.